The sequence spans 36 residues: Kappa-theraphotoxin-Pg1a (36 aa).

Cystine bridges form between cysteine 4–cysteine 19, cysteine 11–cysteine 24, and cysteine 18–cysteine 31.

The protein belongs to the neurotoxin 10 (Hwtx-1) family. 44 (Jztx-4) subfamily. In terms of tissue distribution, expressed by the venom gland.

The protein localises to the secreted. Gating modifier of Kv2.1/KCNB1 (IC(50)=5.1 nM), Kv2.2/KCNB2 and Kv4.3/KCND3 channels (IC(50)=39 nM). Acts by shifting the channel activation to more depolarized potentials by stabilizing the resting conformation of the voltage sensor. It completely inhibits opening of the Kv2.1/KCNB1 channel at negative membrane voltages and dramatically shifts channel activation to positive voltages. May act by partitioning into lipid membranes and then by binding the voltage sensor paddle of the channel from a place within the membrane. The chain is Kappa-theraphotoxin-Pg1a from Chilobrachys guangxiensis (Chinese earth tiger tarantula).